Here is a 545-residue protein sequence, read N- to C-terminus: Calcium-dependent protein kinase 6 (545 aa).

A lipid anchor (N-myristoyl glycine) is attached at Gly-2. Low complexity predominate over residues 34–43 (CSSTSTATSS). A disordered region spans residues 34-58 (CSSTSTATSSGGRMPIRSHQQRLSS). Residues 74-332 (YTVGRKLGQG…AHQVLCHPWV (259 aa)) form the Protein kinase domain. Residues 80–88 (LGQGQFGTT) and Lys-103 each bind ATP. Asp-198 (proton acceptor) is an active-site residue. The interval 338 to 368 (APDRPLAPAVLSRLKQFSAMNRLKKMALRVI) is autoinhibitory domain. EF-hand domains are found at residues 375-410 (EELA…YGSN), 411-446 (LREA…LNKL), 447-482 (EREE…HNMA), and 486-516 (IDDI…GAID). Residues Asp-388, Asp-390, Ser-392, Glu-399, Asp-424, Asp-426, Ser-428, Thr-430, Glu-435, Asp-460, Asp-462, Ser-464, Tyr-466, Glu-471, Asp-494, Asp-496, Asp-498, Arg-500, and Glu-505 each contribute to the Ca(2+) site. The segment at 526–545 (GRPTTATSDDPSPTISSSSR) is disordered. Over residues 528 to 545 (PTTATSDDPSPTISSSSR) the composition is skewed to low complexity.

It belongs to the protein kinase superfamily. Ser/Thr protein kinase family. CDPK subfamily.

It localises to the membrane. It carries out the reaction L-seryl-[protein] + ATP = O-phospho-L-seryl-[protein] + ADP + H(+). The catalysed reaction is L-threonyl-[protein] + ATP = O-phospho-L-threonyl-[protein] + ADP + H(+). With respect to regulation, activated by calcium. Autophosphorylation may play an important role in the regulation of the kinase activity. Its function is as follows. May play a role in signal transduction pathways that involve calcium as a second messenger. This is Calcium-dependent protein kinase 6 from Oryza sativa subsp. japonica (Rice).